The following is a 351-amino-acid chain: Probable protein phosphatase 2C 8 (351 aa).

The segment at 1 to 63 is disordered; that stretch reads MLEKESDLTA…REAEEDKPSF (63 aa). The segment covering 54-63 has biased composition (basic and acidic residues); sequence REAEEDKPSF. A PPM-type phosphatase domain is found at 74-348; that stretch reads EADVAEDKGA…DNCTAIVIVF (275 aa). Mn(2+) is bound by residues D114, G115, D295, and D339.

It belongs to the PP2C family. Mg(2+) serves as cofactor. It depends on Mn(2+) as a cofactor.

It catalyses the reaction O-phospho-L-seryl-[protein] + H2O = L-seryl-[protein] + phosphate. The catalysed reaction is O-phospho-L-threonyl-[protein] + H2O = L-threonyl-[protein] + phosphate. The sequence is that of Probable protein phosphatase 2C 8 from Arabidopsis thaliana (Mouse-ear cress).